Reading from the N-terminus, the 904-residue chain is Phosphatidate phosphatase PAH1 (904 aa).

Residues methionine 1–glutamine 112 are N-LIP. Disordered regions lie at residues glutamate 254–glutamate 293, glutamate 305–asparagine 326, glycine 440–threonine 470, valine 574–glycine 595, and glutamate 612–arginine 655. Composition is skewed to basic and acidic residues over residues aspartate 265–glutamate 293, glutamate 311–asparagine 326, and serine 449–threonine 470. The span at glycine 631–threonine 642 shows a compositional bias: polar residues. The segment at isoleucine 703 to alanine 857 is C-LIP. The short motif at aspartate 707–threonine 711 is the DXDXT motif element.

The protein belongs to the lipin family. The cofactor is Mg(2+). As to expression, expressed in roots, leaves, stems, flowers, siliques, embryos and mature seeds.

The protein resides in the cytoplasm. Its subcellular location is the cytosol. The enzyme catalyses a 1,2-diacyl-sn-glycero-3-phosphate + H2O = a 1,2-diacyl-sn-glycerol + phosphate. Functionally, magnesium-dependent phosphatidate phosphatase which catalyzes the dephosphorylation of phosphatidate to yield diacylglycerol. Acts redundantly with PAH2 to repress phospholipid biosynthesis at the endoplasmic reticulum (ER). May function indirectly as repressor of multiple enzymes involved in phospholipid biosynthesis. Is involved in the pathway of galactolipid synthesis in the ER, which is required for the membrane lipid remodeling, an essential adaptation mechanism to cope with phosphate starvation. The chain is Phosphatidate phosphatase PAH1 (PAH1) from Arabidopsis thaliana (Mouse-ear cress).